The following is a 236-amino-acid chain: Ubiquinone biosynthesis O-methyltransferase (236 aa).

Residues R39, G59, D80, and M124 each contribute to the S-adenosyl-L-methionine site.

Belongs to the methyltransferase superfamily. UbiG/COQ3 family.

The enzyme catalyses a 3-demethylubiquinol + S-adenosyl-L-methionine = a ubiquinol + S-adenosyl-L-homocysteine + H(+). It catalyses the reaction a 3-(all-trans-polyprenyl)benzene-1,2-diol + S-adenosyl-L-methionine = a 2-methoxy-6-(all-trans-polyprenyl)phenol + S-adenosyl-L-homocysteine + H(+). The protein operates within cofactor biosynthesis; ubiquinone biosynthesis. In terms of biological role, O-methyltransferase that catalyzes the 2 O-methylation steps in the ubiquinone biosynthetic pathway. In Shewanella sp. (strain MR-4), this protein is Ubiquinone biosynthesis O-methyltransferase.